The sequence spans 111 residues: Nucleoid-associated protein CYB_2894 (111 aa).

It belongs to the YbaB/EbfC family. As to quaternary structure, homodimer.

Its subcellular location is the cytoplasm. The protein resides in the nucleoid. In terms of biological role, binds to DNA and alters its conformation. May be involved in regulation of gene expression, nucleoid organization and DNA protection. This Synechococcus sp. (strain JA-2-3B'a(2-13)) (Cyanobacteria bacterium Yellowstone B-Prime) protein is Nucleoid-associated protein CYB_2894.